The sequence spans 677 residues: Collagen alpha-2(IX) chain (677 aa).

The N-terminal stretch at 1 to 21 is a signal peptide; sequence MAHRSPALCLLLLHAACLCLA. Residues 25-161 form a triple-helical region 4 (COL4) region; it reads GPPGEPGPRG…PGKPGPPGHI (137 aa). The segment covering 28–41 has biased composition (pro residues); that stretch reads GEPGPRGPPGPPGV. Residues 28-516 form a disordered region; that stretch reads GEPGPRGPPG…MPGQRGVAGR (489 aa). Positions 53-66 are enriched in low complexity; it reads SPGAPGSPGAKGEP. The segment covering 68-77 has biased composition (pro residues); it reads APGPDGPPGK. Over residues 91–100 the composition is skewed to gly residues; that stretch reads GPWGGQGLKG. Composition is skewed to pro residues over residues 104-121 and 137-158; these read LPGPPGLPGPSLPGPPGL and KGDPGPDGPRGPPGPPGKPGPP. Pro-158 is subject to 4-hydroxyproline. A nonhelical region 4 (NC4) region spans residues 162–178; sequence QGVEGSADFLCPTNCPP. An O-linked (Xyl...) (glycosaminoglycan) serine glycan is attached at Ser-167. Residue Pro-178 is modified to 4-hydroxyproline. Residues 179–517 are triple-helical region 3 (COL3); it reads GPKGPQGLQG…PGQRGVAGRD (339 aa). Lys-181 is modified (5-hydroxylysine). O-linked (Gal...) hydroxylysine glycosylation occurs at Lys-181. An Allysine modification is found at Lys-190. Low complexity-rich tracts occupy residues 363-382, 430-442, and 496-505; these read TPGLDGEPGPPGDAGTAGVP, PGKTGPKGSTGDP, and RGLLGERGVP. Residues 518-547 form a nonhelical region 3 (NC3) region; sequence AGDQHIIDVVLKMMQEQLAEVAVSAKRAAL. The triple-helical region 2 (COL2) stretch occupies residues 548-630; that stretch reads GGVGAMGPPG…PGLPGIPGHA (83 aa). The segment at 550 to 657 is disordered; sequence VGAMGPPGPP…GRPGSPGPAG (108 aa). Positions 555 to 565 are enriched in pro residues; the sequence is PPGPPGPPGPP. Over residues 597 to 609 the composition is skewed to basic and acidic residues; the sequence is KRGEKGERGDTGR. The segment at 631 to 632 is nonhelical region 2 (NC2); the sequence is LA. The triple-helical region 1 (COL1) stretch occupies residues 633 to 662; it reads GKDGERGPPGVPGDAGRPGSPGPAGLPGFC. Positions 663–677 are nonhelical region 1 (NC1); sequence EPAACLGALPTPRHG.

This sequence belongs to the fibril-associated collagens with interrupted helices (FACIT) family. Heterotrimer of an alpha 1(IX), an alpha 2(IX) and an alpha 3(IX) chain. The chains are linked to each other by interchain disulfide bonds. Trimers are also cross-linked via hydroxylysines. Covalently linked to the telopeptides of type II collagen by lysine-derived cross-links. In terms of processing, prolines at the third position of the tripeptide repeating unit (G-X-Y) are hydroxylated in some or all of the chains.

The protein localises to the secreted. It is found in the extracellular space. Its subcellular location is the extracellular matrix. In terms of biological role, structural component of hyaline cartilage and vitreous of the eye. This chain is Collagen alpha-2(IX) chain (COL9A2), found in Gallus gallus (Chicken).